Consider the following 203-residue polypeptide: Ribosomal RNA large subunit methyltransferase E (203 aa).

The S-adenosyl-L-methionine site is built by glycine 51, tryptophan 53, aspartate 69, aspartate 85, and aspartate 108. Lysine 148 acts as the Proton acceptor in catalysis.

It belongs to the class I-like SAM-binding methyltransferase superfamily. RNA methyltransferase RlmE family.

It localises to the cytoplasm. The catalysed reaction is uridine(2552) in 23S rRNA + S-adenosyl-L-methionine = 2'-O-methyluridine(2552) in 23S rRNA + S-adenosyl-L-homocysteine + H(+). Functionally, specifically methylates the uridine in position 2552 of 23S rRNA at the 2'-O position of the ribose in the fully assembled 50S ribosomal subunit. This Methanocorpusculum labreanum (strain ATCC 43576 / DSM 4855 / Z) protein is Ribosomal RNA large subunit methyltransferase E.